A 590-amino-acid chain; its full sequence is Aspartate--tRNA(Asp/Asn) ligase (590 aa).

E170 contacts L-aspartate. The tract at residues 194 to 197 is aspartate; that stretch reads QLFK. R216 contributes to the L-aspartate binding site. Residues 216–218 and Q225 each bind ATP; that span reads RDE. H448 is a binding site for L-aspartate. E482 provides a ligand contact to ATP. R489 contributes to the L-aspartate binding site. Position 534 to 537 (534 to 537) interacts with ATP; the sequence is GWDR. A disordered region spans residues 557-590; that stretch reads SGGGADPLTGAPAPITPQQRRESGIDAKPKKDGE. A compositionally biased stretch (basic and acidic residues) spans 575-590; the sequence is QRRESGIDAKPKKDGE.

It belongs to the class-II aminoacyl-tRNA synthetase family. Type 1 subfamily. In terms of assembly, homodimer.

The protein localises to the cytoplasm. The catalysed reaction is tRNA(Asx) + L-aspartate + ATP = L-aspartyl-tRNA(Asx) + AMP + diphosphate. Its function is as follows. Aspartyl-tRNA synthetase with relaxed tRNA specificity since it is able to aspartylate not only its cognate tRNA(Asp) but also tRNA(Asn). Reaction proceeds in two steps: L-aspartate is first activated by ATP to form Asp-AMP and then transferred to the acceptor end of tRNA(Asp/Asn). The polypeptide is Aspartate--tRNA(Asp/Asn) ligase (Mycobacterium sp. (strain JLS)).